The sequence spans 330 residues: Aspartate--ammonia ligase (330 aa).

Belongs to the class-II aminoacyl-tRNA synthetase family. AsnA subfamily.

It localises to the cytoplasm. The catalysed reaction is L-aspartate + NH4(+) + ATP = L-asparagine + AMP + diphosphate + H(+). It functions in the pathway amino-acid biosynthesis; L-asparagine biosynthesis; L-asparagine from L-aspartate (ammonia route): step 1/1. The polypeptide is Aspartate--ammonia ligase (Escherichia coli O8 (strain IAI1)).